The sequence spans 212 residues: ATP-dependent Clp protease proteolytic subunit 2 (212 aa).

Residues 1 to 20 (MSHNTSIASQGMPAMAGPET) form a disordered region. Catalysis depends on Ser-107, which acts as the Nucleophile. His-132 is a catalytic residue.

It belongs to the peptidase S14 family. Fourteen ClpP subunits assemble into 2 heptameric rings which stack back to back to give a disk-like structure with a central cavity, resembling the structure of eukaryotic proteasomes.

The protein localises to the cytoplasm. The catalysed reaction is Hydrolysis of proteins to small peptides in the presence of ATP and magnesium. alpha-casein is the usual test substrate. In the absence of ATP, only oligopeptides shorter than five residues are hydrolyzed (such as succinyl-Leu-Tyr-|-NHMec, and Leu-Tyr-Leu-|-Tyr-Trp, in which cleavage of the -Tyr-|-Leu- and -Tyr-|-Trp bonds also occurs).. In terms of biological role, cleaves peptides in various proteins in a process that requires ATP hydrolysis. Has a chymotrypsin-like activity. Plays a major role in the degradation of misfolded proteins. This chain is ATP-dependent Clp protease proteolytic subunit 2, found in Cutibacterium acnes (strain DSM 16379 / KPA171202) (Propionibacterium acnes).